Consider the following 253-residue polypeptide: Sugar fermentation stimulation protein homolog (253 aa).

This sequence belongs to the SfsA family.

The protein is Sugar fermentation stimulation protein homolog of Prochlorococcus marinus (strain NATL1A).